Reading from the N-terminus, the 274-residue chain is Glutamate racemase (274 aa).

Substrate-binding positions include 9–10 (DS) and 41–42 (YG). Residue Cys73 is the Proton donor/acceptor of the active site. 74 to 75 (NT) provides a ligand contact to substrate. The Proton donor/acceptor role is filled by Cys183. Position 184 to 185 (184 to 185 (TH)) interacts with substrate.

The protein belongs to the aspartate/glutamate racemases family.

It carries out the reaction L-glutamate = D-glutamate. It functions in the pathway cell wall biogenesis; peptidoglycan biosynthesis. In terms of biological role, provides the (R)-glutamate required for cell wall biosynthesis. The sequence is that of Glutamate racemase from Shewanella baltica (strain OS195).